We begin with the raw amino-acid sequence, 496 residues long: Nectin 1a (496 aa).

The N-terminal stretch at 1-20 (MMFINLLLRLMCVFLIGADG) is a signal peptide. The Extracellular portion of the chain corresponds to 21 to 349 (QMVQMESSKA…FQDQQQAGVV (329 aa)). Positions 34–138 (GSQVELPCQF…GNRENMVNLT (105 aa)) constitute an Ig-like V-type domain. Cys41 and Cys121 are disulfide-bonded. N-linked (GlcNAc...) asparagine glycans are attached at residues Asn62 and Asn136. 2 consecutive Ig-like C2-type domains span residues 143 to 238 (PMIQ…VTLN) and 243 to 330 (PEVI…VIVT). Disulfide bonds link Cys168-Cys222 and Cys265-Cys312. Residue Asn282 is glycosylated (N-linked (GlcNAc...) asparagine). The chain crosses the membrane as a helical span at residues 350 to 370 (IGGAVVCGTVLLAAVTLLVVF). Residues 371–496 (LYRRRCMFKG…SVISKEEWYV (126 aa)) are Cytoplasmic-facing.

Belongs to the nectin family. In terms of assembly, cis- and trans-homodimer. Can form trans-heterodimers. In terms of tissue distribution, expressed in the developing eye and nervous system.

The protein localises to the cell membrane. It localises to the cell junction. It is found in the adherens junction. Its function is as follows. Cell adhesion molecule that promotes cell-cell contacts and plays important roles in the development of the nervous system. Acts by forming homophilic or heterophilic trans-dimers. The sequence is that of Nectin 1a from Danio rerio (Zebrafish).